A 414-amino-acid polypeptide reads, in one-letter code: 2,3-diketo-5-methylthiopentyl-1-phosphate enolase (414 aa).

Residue Lys99 is the Proton acceptor of the active site. Residues Lys148, 174–177 (KDDE), His265, Gly338, and 360–361 (GG) each bind substrate. 3 residues coordinate Mg(2+): Lys174, Asp176, and Glu177. Position 174 is an N6-carboxylysine (Lys174).

This sequence belongs to the RuBisCO large chain family. Type IV subfamily. Homodimer. It depends on Mg(2+) as a cofactor.

It catalyses the reaction 5-methylsulfanyl-2,3-dioxopentyl phosphate = 2-hydroxy-5-methylsulfanyl-3-oxopent-1-enyl phosphate. It participates in amino-acid biosynthesis; L-methionine biosynthesis via salvage pathway; L-methionine from S-methyl-5-thio-alpha-D-ribose 1-phosphate: step 3/6. In terms of biological role, catalyzes the enolization of 2,3-diketo-5-methylthiopentyl-1-phosphate (DK-MTP-1-P) into 2-hydroxy-3-keto-5-methylthiopentenyl-1-phosphate (HK-MTPenyl-1-P). The protein is 2,3-diketo-5-methylthiopentyl-1-phosphate enolase of Bacillus mycoides (strain KBAB4) (Bacillus weihenstephanensis).